Consider the following 327-residue polypeptide: Tagatose 1,6-diphosphate aldolase 2 (327 aa).

Belongs to the aldolase LacD family.

It carries out the reaction D-tagatofuranose 1,6-bisphosphate = D-glyceraldehyde 3-phosphate + dihydroxyacetone phosphate. Its pathway is carbohydrate metabolism; D-tagatose 6-phosphate degradation; D-glyceraldehyde 3-phosphate and glycerone phosphate from D-tagatose 6-phosphate: step 2/2. The sequence is that of Tagatose 1,6-diphosphate aldolase 2 from Streptococcus pyogenes serotype M6 (strain ATCC BAA-946 / MGAS10394).